The primary structure comprises 279 residues: Pantothenate synthetase (279 aa).

Residue 31–38 participates in ATP binding; sequence MGNLHGGH. His38 acts as the Proton donor in catalysis. Gln62 is a binding site for (R)-pantoate. Position 62 (Gln62) interacts with beta-alanine. 150-153 is a binding site for ATP; sequence GRKD. A (R)-pantoate-binding site is contributed by Gln156. Residues Val179 and 187-190 contribute to the ATP site; that span reads KSSR.

The protein belongs to the pantothenate synthetase family. In terms of assembly, homodimer.

It localises to the cytoplasm. The enzyme catalyses (R)-pantoate + beta-alanine + ATP = (R)-pantothenate + AMP + diphosphate + H(+). It functions in the pathway cofactor biosynthesis; (R)-pantothenate biosynthesis; (R)-pantothenate from (R)-pantoate and beta-alanine: step 1/1. Catalyzes the condensation of pantoate with beta-alanine in an ATP-dependent reaction via a pantoyl-adenylate intermediate. The polypeptide is Pantothenate synthetase (Stenotrophomonas maltophilia (strain R551-3)).